Reading from the N-terminus, the 1166-residue chain is MNDEAVAFSQAVQVVDPDVRAHVYSLVTALGGFNGEDADRYVLGDDALACLRDIRRWLKLYDEKYHRMDVARCLGEANLVNGDLLPIFSLWWSTGQKSKYMSRIALACLELLVPLTWPLEVHGEMTVNHHRHFPYLQHAQVSYKRGLLSRGDLNFLRTIIRIGLPSMAVPRSERTTRDDGILKLMLYLLRNIVVIAPNARLAADGDEEETSRSATINAFQAQDVFALLLTMCSNVGDDFNMQDVILLEILFHLVKGVNVQKLFMDDAQRSAKHTDELDTLLKQESSLRREYAKNAPTRHGRFGTMIWVKRDDAKVSTVSGQDVLKDSQATLQKMDESKKWNRPQPRKTHEDSVLNNDFSTPAHLNSTASRNLRMFVEEFLDSGFNPLFTHVRKALEREADRVVPINSRQFFYTVAWFLDAERARRARQQEMHLQNGKPMKELERDGFGLVASVLDQETLVFLNRSMQISFDQKDWEDLNAEMRCFTQILLTVQEMTQSLLEEDQEIAENIQNRIFYEETTHDRVLAIMREYKGQGFGYLDACTELSHVFLRMLERYSKENVDMQVRSRRRSRRKNMETQVAAPEDNNEEHASDDEDIMEAERICRERKFDFKRFAAKFCNQKCVDTFVAFTKFFRELNSDQLKRAHRYFYRIAFKQEMSVLLFRVDILNLFYTMIKGPGAMDSSKPIFKEWEELVRQVIRRMIKKIDQRPALITELLFSKMNSTLFYLEYGHERQTLPSVRRAPAELEVNPSEATTQEDKIKIVIGALVMDGQADLVAWVSNVLGTAAEERESWEAYEDAQRDEAQGAPRAPNPMIAVLPHDDACKQAMYFNAKLRLLMTLVGFERLGMEDVVGASWVVPSSQGSKDLKGIKLTIDKCLEDPYTGDIEHDPRQMLRRKYKPDDKEHNRQTTLDVDFGSESEGEDVPDGPLFPPNPRSKANAPNDSKTRRKNREAVGEREPIDEDTLEARRKARQENTRARLAKIKSELFVHASDDESDEEADKEFFDLEEKRRKEQAARVRKALLTGVVDEIGRKANKKSERKRLSNSGKSDTQSKRQRRGRTTEALDEDDDIIMDGAVARSSDHATEDDENTSATSDEDDEFDFDDNLAFRRDRDLDRDPVLPSHAEDMQPTDTRELRDNDENAPVATLARRRLRAGFVIDSDSE.

4 disordered regions span residues 333–358 (KMDE…NNDF), 564–594 (QVRS…ASDD), 881–981 (DPYT…RARL), and 1023–1145 (ALLT…DENA). Acidic residues predominate over residues 585–594 (DNNEEHASDD). A compositionally biased stretch (basic and acidic residues) spans 881–893 (DPYTGDIEHDPRQ). A compositionally biased stretch (acidic residues) spans 916 to 926 (FGSESEGEDVP). Over residues 966–981 (LEARRKARQENTRARL) the composition is skewed to basic and acidic residues. A compositionally biased stretch (acidic residues) spans 1087-1107 (TEDDENTSATSDEDDEFDFDD). Residues 1109–1142 (LAFRRDRDLDRDPVLPSHAEDMQPTDTRELRDND) show a composition bias toward basic and acidic residues.

The protein belongs to the timeless family.

The protein localises to the nucleus. Functionally, involved in chromosome segregation during meiosis and DNA damage repair. The sequence is that of Topoisomerase 1-associated factor 1 (tof1) from Aspergillus oryzae (strain ATCC 42149 / RIB 40) (Yellow koji mold).